A 159-amino-acid polypeptide reads, in one-letter code: 2-C-methyl-D-erythritol 2,4-cyclodiphosphate synthase (159 aa).

The a divalent metal cation site is built by D8 and H10. 4-CDP-2-C-methyl-D-erythritol 2-phosphate is bound by residues 8-10 (DVH) and 34-35 (HS). H42 contacts a divalent metal cation. 4-CDP-2-C-methyl-D-erythritol 2-phosphate contacts are provided by residues 56-58 (DIG), 61-65 (FPDTD), 100-106 (AQAPKML), 132-135 (TTTE), F139, and R142.

It belongs to the IspF family. In terms of assembly, homotrimer. The cofactor is a divalent metal cation.

The enzyme catalyses 4-CDP-2-C-methyl-D-erythritol 2-phosphate = 2-C-methyl-D-erythritol 2,4-cyclic diphosphate + CMP. Its pathway is isoprenoid biosynthesis; isopentenyl diphosphate biosynthesis via DXP pathway; isopentenyl diphosphate from 1-deoxy-D-xylulose 5-phosphate: step 4/6. Involved in the biosynthesis of isopentenyl diphosphate (IPP) and dimethylallyl diphosphate (DMAPP), two major building blocks of isoprenoid compounds. Catalyzes the conversion of 4-diphosphocytidyl-2-C-methyl-D-erythritol 2-phosphate (CDP-ME2P) to 2-C-methyl-D-erythritol 2,4-cyclodiphosphate (ME-CPP) with a corresponding release of cytidine 5-monophosphate (CMP). This chain is 2-C-methyl-D-erythritol 2,4-cyclodiphosphate synthase, found in Salmonella typhimurium (strain LT2 / SGSC1412 / ATCC 700720).